Here is a 282-residue protein sequence, read N- to C-terminus: Pantothenate synthetase (282 aa).

Residue Met30–His37 participates in ATP binding. Residue His37 is the Proton donor of the active site. Gln61 is a (R)-pantoate binding site. Gln61 serves as a coordination point for beta-alanine. Gly147–Asp150 is an ATP binding site. Gln153 is a binding site for (R)-pantoate. ATP contacts are provided by residues Val176 and Lys184 to Arg187.

Belongs to the pantothenate synthetase family. In terms of assembly, homodimer.

It is found in the cytoplasm. It catalyses the reaction (R)-pantoate + beta-alanine + ATP = (R)-pantothenate + AMP + diphosphate + H(+). It participates in cofactor biosynthesis; (R)-pantothenate biosynthesis; (R)-pantothenate from (R)-pantoate and beta-alanine: step 1/1. Its function is as follows. Catalyzes the condensation of pantoate with beta-alanine in an ATP-dependent reaction via a pantoyl-adenylate intermediate. The sequence is that of Pantothenate synthetase from Bacillus cereus (strain ATCC 14579 / DSM 31 / CCUG 7414 / JCM 2152 / NBRC 15305 / NCIMB 9373 / NCTC 2599 / NRRL B-3711).